The primary structure comprises 107 residues: L-amino-acid oxidase (107 aa).

Residue 35 to 38 (GPMR) participates in FAD binding. Residues Arg-38 and His-49 each contribute to the substrate site.

Belongs to the flavin monoamine oxidase family. FIG1 subfamily. In terms of assembly, homodimer; non-covalently linked. Requires FAD as cofactor. In terms of processing, N-glycosylated. Expressed by the venom gland.

The protein resides in the secreted. The catalysed reaction is an L-alpha-amino acid + O2 + H2O = a 2-oxocarboxylate + H2O2 + NH4(+). The enzyme catalyses L-leucine + O2 + H2O = 4-methyl-2-oxopentanoate + H2O2 + NH4(+). It carries out the reaction L-phenylalanine + O2 + H2O = 3-phenylpyruvate + H2O2 + NH4(+). It catalyses the reaction L-tryptophan + O2 + H2O = indole-3-pyruvate + H2O2 + NH4(+). The catalysed reaction is L-methionine + O2 + H2O = 4-methylsulfanyl-2-oxobutanoate + H2O2 + NH4(+). The enzyme catalyses L-isoleucine + O2 + H2O = (S)-3-methyl-2-oxopentanoate + H2O2 + NH4(+). It carries out the reaction L-arginine + O2 + H2O = 5-guanidino-2-oxopentanoate + H2O2 + NH4(+). It catalyses the reaction L-histidine + O2 + H2O = 3-(imidazol-5-yl)pyruvate + H2O2 + NH4(+). Catalyzes an oxidative deamination of predominantly hydrophobic and aromatic L-amino acids, thus producing hydrogen peroxide that may contribute to the diverse toxic effects of this enzyme. Shows high activity on L-Met, moderate activity on L-Trp, L-Leu, L-His, L-Phe, L-Arg, L-Ile, low activity on L-Val, L-Glu, L-Lys, L-Gln, L-Asn, L-Tyr, L-Ala, and no activity on L-Asp, L-Ser, L-Pro, L-Gly, L-Thr and L-Cys. Shows antimicrobial activity inhibiting the growth of both Gram-negative and Gram-positive bacteria. Also inhibits platelet aggregation induced by ADP or collagen. Effects of snake L-amino oxidases on platelets are controversial, since they either induce aggregation or inhibit agonist-induced aggregation. These different effects are probably due to different experimental conditions. This protein may also induce hemorrhage, hemolysis, edema, apoptosis, and have antiparasitic activities. The protein is L-amino-acid oxidase of Macrovipera lebetinus (Levantine viper).